A 104-amino-acid polypeptide reads, in one-letter code: L-rhamnose mutarotase (104 aa).

Y18 contacts substrate. The active-site Proton donor is the H22. Residues Y41 and 76 to 77 (WW) each bind substrate.

This sequence belongs to the rhamnose mutarotase family. In terms of assembly, homodimer.

The protein localises to the cytoplasm. The catalysed reaction is alpha-L-rhamnose = beta-L-rhamnose. The protein operates within carbohydrate metabolism; L-rhamnose metabolism. In terms of biological role, involved in the anomeric conversion of L-rhamnose. The protein is L-rhamnose mutarotase of Burkholderia ambifaria (strain ATCC BAA-244 / DSM 16087 / CCUG 44356 / LMG 19182 / AMMD) (Burkholderia cepacia (strain AMMD)).